The following is a 134-amino-acid chain: Interleukin-5 (134 aa).

A signal peptide spans 1–19 (MRMLLHLSLLALGASYMYA). Residue threonine 22 is glycosylated (O-linked (GalNAc...) threonine). N-linked (GlcNAc...) asparagine glycans are attached at residues asparagine 47 and asparagine 90.

It belongs to the IL-5 family. As to quaternary structure, homodimer; disulfide-linked. Interacts with IL5RA. Interacts with CSF2RB.

Its subcellular location is the secreted. Functionally, homodimeric cytokine expressed predominantly by T-lymphocytes and NK cells that plays an important role in the survival, differentiation, and chemotaxis of eosinophils. Also acts on activated and resting B-cells to induce immunoglobulin production, growth, and differentiation. Mechanistically, exerts its biological effects through a receptor composed of IL5RA subunit and the cytokine receptor common subunit beta/CSF2RB. Binding to the receptor leads to activation of various kinases including LYN, SYK and JAK2 and thereby propagates signals through the RAS-MAPK and JAK-STAT5 pathways respectively. The polypeptide is Interleukin-5 (IL5) (Cercocebus atys (Sooty mangabey)).